The following is a 131-amino-acid chain: D-ribose pyranase (131 aa).

Catalysis depends on histidine 20, which acts as the Proton donor. Substrate is bound by residues aspartate 28, histidine 98, and 120–122 (YAN).

The protein belongs to the RbsD / FucU family. RbsD subfamily. Homodecamer.

It localises to the cytoplasm. The catalysed reaction is beta-D-ribopyranose = beta-D-ribofuranose. It participates in carbohydrate metabolism; D-ribose degradation; D-ribose 5-phosphate from beta-D-ribopyranose: step 1/2. Its function is as follows. Catalyzes the interconversion of beta-pyran and beta-furan forms of D-ribose. The protein is D-ribose pyranase of Bacillus anthracis (strain A0248).